Reading from the N-terminus, the 1218-residue chain is MSRLLWKKVAGAKVASGPVPATARWVASSVLDPVPSDGRPPSQMPSSENGQLRLNPLLIQMLSRGLHEQIFGCGGEMPDEAAVQRSVEHLQKHGLWGQPATPLPDVELRLPRLFGGNLDQHFRLLAQKQSLPYLEAAASLLEAQLPPEPKSWAWAEGWTRYGPEGEAEPVAIPEERALVFDVEVCLAEGTCPTLAVAISPSAWYSWCSRRLVEERYSWTSQLSPADLIPLGGSTSASSSTKQDGQEQLVVGHNVSFDRAHIREQYLIQDSRMRFLDTMSMHMAISGLSSFQRSLWMGAKQGKHKNPAAHKARAEVPEESQWSSESSSWDWMDISSANNLADVHNLYVGGPPLEKEPRELFVKGSMRDIRENFQDLMQYCARDVWATFEVFQQQLPLFLERCPHPVTLAGMLEMGVSYLPVNQNWERYLTEAQNTYEELQREMKKSLMDLANDACQLLSGERYKEDPWLWDLEWDLQEFKQKKAKKVKKPASASKLPIEGAGPFGDPMDQEDPGPPSEEEELQRSVTAHNRLQQLRSTTDLLPKRPQHLPGHPGWYRQLCPRLDDPAWAPGPSLLSLQMRVTPKLMALTWDGFPLHYSDSHGWGYLVPGRRDNLTEPPVSPTVESAAVTCPYRAIESLYRKHCLEQGKQQLEPQEVDLAEEFLLTDNSAMWQTVEELGCLDVEAEAKMENSGLSQPLVLPAACAPKSSQPTYHHGNGPYNDVNIPGCWFFKLPHKDGNNYNVGSPFAKDFLPKMEDGTLQAGPGGASGPRALEINKMISFWRNAHKRISSQMVVWLPRSALPRVVTRHPAFDEEGHYGAILPQVVTAGTITRRAVEPTWLTASNARPDRVGSELKAMVQAPPGYVLVGADVDSQELWIAAVLGDAHFAGMHGCTAFGWMTLQGRKSRGTDLHSKTAATVGISREHAKIFNYGRIYGAGQSFAERLLMQFNHRLTRQEAAEKAQQMYAVTKGLRRYRLSADGEWLVKQLNLPVDRTEDGWVSLQDLRMIRREASRKSRWKKWEVAAERAWTGGTESEMFNKLESIAMSDTPRTPVLGCCISRALEPSVVQGEFITSRVNWVVQSSAVDYLHLMLVAMKWLFEEFAIDGRFCISIHDEVRYLVREEDRYRAALALQITNLLTRCMFAYKLGLNDLPQSVAFFSAVDIDQCLRKEVTMDCKTPSNPTGMERRYGIPQGEALDIYQIIELTKGSLEKRSQPGP.

The tract at residues 31–50 is disordered; it reads LDPVPSDGRPPSQMPSSENG. Residues 179-183 carry the Exo I motif; the sequence is VFDVE. The active-site Exonuclease activity is the Asp181. Positions 250 to 258 match the Exo II motif; sequence VGHNVSFDR. Residue Ser289 coordinates DNA. Residues 378–386 carry the Exo III motif; the sequence is YCARDVWAT. The tract at residues 484 to 524 is disordered; that stretch reads KKVKKPASASKLPIEGAGPFGDPMDQEDPGPPSEEEELQRS. The interval 492–553 is accessory-interacting determinant; the sequence is ASKLPIEGAG…RPQHLPGHPG (62 aa). Residues 507 to 520 show a composition bias toward acidic residues; that stretch reads MDQEDPGPPSEEEE. Arg561 is an RNA binding site. A DNA-binding site is contributed by Ser575. RNA is bound by residues His733, Gly742, and Lys747. DNA is bound by residues Lys785 and Thr828. A trigger loop region spans residues 837–843; sequence TWLTASN. Residues Ser842 and Arg848 each coordinate RNA. Residues 866 to 875 carry the Pol A motif; the sequence is VGADVDSQEL. Residues Asp869, Val870, Ser872, Glu874, Arg922, Lys926, and Tyr930 each contribute to the a 2'-deoxyribonucleoside 5'-triphosphate site. 2 residues coordinate Mg(2+): Asp869 and Val870. A Pol B motif is present at residues 922–937; that stretch reads REHAKIFNYGRIYGAG. Residues Thr1073 and Ser1074 each contribute to the DNA site. The short motif at 1113 to 1120 is the Pol C element; that stretch reads HDEVRYLV. Asp1114 is an a 2'-deoxyribonucleoside 5'-triphosphate binding site. Position 1114 (Asp1114) interacts with Mg(2+).

The protein belongs to the DNA polymerase type-A family. As to quaternary structure, heterotrimer composed of a catalytic subunit and a homodimer of accessory subunits (POLG:POLG2). Interacts with TTC3. Interacts with LIG3. The cofactor is Mg(2+).

It is found in the mitochondrion. Its subcellular location is the mitochondrion matrix. The protein resides in the mitochondrion nucleoid. The enzyme catalyses DNA(n) + a 2'-deoxyribonucleoside 5'-triphosphate = DNA(n+1) + diphosphate. The catalysed reaction is a 3'-end 2'-deoxyribonucleotidyl-deoxyribonucleotide-DNA + H2O = a 3'-end 2'-deoxyribonucleotide-DNA + a 2'-deoxyribonucleoside 5'-phosphate + H(+). It catalyses the reaction a 5'-end 2'-deoxyribose-2'-deoxyribonucleotide-DNA = (2E,4S)-4-hydroxypenten-2-al-5-phosphate + a 5'-end 5'-phospho-2'-deoxyribonucleoside-DNA + H(+). Inhibited by dideoxynucleotides such as antiviral agent zalcitabine. Its function is as follows. Catalytic subunit of DNA polymerase gamma solely responsible for replication of mitochondrial DNA (mtDNA). Replicates both heavy and light strands of the circular mtDNA genome using a single-stranded DNA template, RNA primers and the four deoxyribonucleoside triphosphates as substrates. Has 5' -&gt; 3' polymerase activity. Functionally interacts with TWNK and SSBP1 at the replication fork to form a highly processive replisome, where TWNK unwinds the double-stranded DNA template prior to replication and SSBP1 covers the parental heavy strand to enable continuous replication of the entire mitochondrial genome. A single nucleotide incorporation cycle includes binding of the incoming nucleotide at the insertion site, a phosphodiester bond formation reaction that extends the 3'-end of the primer DNA, and translocation of the primer terminus to the post-insertion site. After completing replication of a mtDNA strand, mediates 3' -&gt; 5' exonucleolytic degradation at the nick to enable proper ligation. Highly accurate due to high nucleotide selectivity and 3' -&gt; 5' exonucleolytic proofreading. Proficiently corrects base substitutions, single-base additions and deletions in non-repetitive sequences and short repeats, but displays lower proofreading activity when replicating longer homopolymeric stretches. Exerts exonuclease activity toward single-stranded DNA and double-stranded DNA containing 3'-terminal mispairs. When a misincorporation occurs, transitions from replication to a pro-nucleolytic editing mode and removes the missincorporated nucleoside in the exonuclease active site. Proceeds via an SN2 nucleolytic mechanism in which Asp-198 catalyzes phosphodiester bond hydrolysis and Glu-200 stabilizes the leaving group. As a result the primer strand becomes one nucleotide shorter and is positioned in the post-insertion site, ready to resume DNA synthesis. Exerts 5'-deoxyribose phosphate (dRP) lyase activity and mediates repair-associated mtDNA synthesis (gap filling) in base-excision repair pathway. Catalyzes the release of the 5'-terminal 2-deoxyribose-5-phosphate sugar moiety from incised apurinic/apyrimidinic (AP) sites to produce a substrate for DNA ligase. The dRP lyase reaction does not require divalent metal ions and likely proceeds via a Schiff base intermediate in a beta-elimination reaction mechanism. The polypeptide is DNA polymerase subunit gamma-1 (Mus musculus (Mouse)).